Here is a 203-residue protein sequence, read N- to C-terminus: dTTP/UTP pyrophosphatase (203 aa).

The Proton acceptor role is filled by D70.

Belongs to the Maf family. YhdE subfamily. A divalent metal cation is required as a cofactor.

Its subcellular location is the cytoplasm. It carries out the reaction dTTP + H2O = dTMP + diphosphate + H(+). It catalyses the reaction UTP + H2O = UMP + diphosphate + H(+). In terms of biological role, nucleoside triphosphate pyrophosphatase that hydrolyzes dTTP and UTP. May have a dual role in cell division arrest and in preventing the incorporation of modified nucleotides into cellular nucleic acids. The polypeptide is dTTP/UTP pyrophosphatase (maf-1) (Pseudomonas putida (strain ATCC 47054 / DSM 6125 / CFBP 8728 / NCIMB 11950 / KT2440)).